We begin with the raw amino-acid sequence, 367 residues long: Mitogen-activated protein kinase 12 (367 aa).

The region spanning 27–311 (YRDLQPVGSG…AGEALAHPYF (285 aa)) is the Protein kinase domain. ATP-binding positions include 33-41 (VGSGAYGAV) and K56. The active-site Proton acceptor is the D153. A Phosphothreonine; by MAP2K3 and MAP2K6 modification is found at T183. The TXY signature appears at 183-185 (TGY). Residue Y185 is modified to Phosphotyrosine.

Belongs to the protein kinase superfamily. CMGC Ser/Thr protein kinase family. MAP kinase subfamily. As to quaternary structure, monomer. Interacts with the PDZ domain of the syntrophin SNTA1. Interacts with SH3BP5. Interacts with LIN7C, SCRIB and SYNJ2BP. Interacts with PTPN4; this interaction induces the activation of PTPN4 phosphatase activity. The cofactor is Mg(2+). Post-translationally, dually phosphorylated on Thr-183 and Tyr-185 by MAP2K3/MKK3 and MAP2K6/MKK6, which activates the enzyme. Ubiquitinated. Ubiquitination leads to degradation by the proteasome pathway. In terms of tissue distribution, highly expressed in skeletal muscle and heart.

The protein localises to the cytoplasm. The protein resides in the nucleus. It is found in the mitochondrion. It carries out the reaction L-seryl-[protein] + ATP = O-phospho-L-seryl-[protein] + ADP + H(+). The catalysed reaction is L-threonyl-[protein] + ATP = O-phospho-L-threonyl-[protein] + ADP + H(+). Its activity is regulated as follows. Activated by phosphorylation on threonine and tyrosine. MAP2K3/MKK3 and MAP2K6/MKK6 are both essential for the activation of MAPK12 induced by environmental stress, whereas MAP2K6/MKK6 is the major MAPK12 activator in response to TNF-alpha. Serine/threonine kinase which acts as an essential component of the MAP kinase signal transduction pathway. MAPK12 is one of the four p38 MAPKs which play an important role in the cascades of cellular responses evoked by extracellular stimuli such as pro-inflammatory cytokines or physical stress leading to direct activation of transcription factors such as ELK1 and ATF2. Accordingly, p38 MAPKs phosphorylate a broad range of proteins and it has been estimated that they may have approximately 200 to 300 substrates each. Some of the targets are downstream kinases such as MAPKAPK2, which are activated through phosphorylation and further phosphorylate additional targets. Plays a role in myoblast differentiation and also in the down-regulation of cyclin D1 in response to hypoxia in adrenal cells suggesting MAPK12 may inhibit cell proliferation while promoting differentiation. Phosphorylates DLG1. Following osmotic shock, MAPK12 in the cell nucleus increases its association with nuclear DLG1, thereby causing dissociation of DLG1-SFPQ complexes. This function is independent of its catalytic activity and could affect mRNA processing and/or gene transcription to aid cell adaptation to osmolarity changes in the environment. Regulates UV-induced checkpoint signaling and repair of UV-induced DNA damage and G2 arrest after gamma-radiation exposure. MAPK12 is involved in the regulation of SLC2A1 expression and basal glucose uptake in L6 myotubes; and negatively regulates SLC2A4 expression and contraction-mediated glucose uptake in adult skeletal muscle. C-Jun (JUN) phosphorylation is stimulated by MAPK14 and inhibited by MAPK12, leading to a distinct AP-1 regulation. MAPK12 is required for the normal kinetochore localization of PLK1, prevents chromosomal instability and supports mitotic cell viability. MAPK12-signaling is also positively regulating the expansion of transient amplifying myogenic precursor cells during muscle growth and regeneration. The chain is Mitogen-activated protein kinase 12 (MAPK12) from Homo sapiens (Human).